An 85-amino-acid chain; its full sequence is U4-theraphotoxin-Hhn1a (85 aa).

An N-terminal signal peptide occupies residues 1–22 (MKMTLIAILTCAAVLVLHITAA). Positions 23–48 (EELEAESQLMEVGMPDTELEAVDEER) are excised as a propeptide. 3 cysteine pairs are disulfide-bonded: Cys52/Cys66, Cys56/Cys77, and Cys71/Cys82.

It belongs to the neurotoxin 12 (Hwtx-2) family. 02 (Hwtx-2) subfamily. In terms of assembly, monomer. As to expression, expressed by the venom gland.

It is found in the secreted. Functionally, neurotoxin active on both insects and mammals. This is U4-theraphotoxin-Hhn1a from Cyriopagopus hainanus (Chinese bird spider).